Here is a 228-residue protein sequence, read N- to C-terminus: MKISFHGQSCIKIITGNTTILVDPFISGNEKCDLKAEEQMPDFIVLSHGHDDHVGDTVEIAKNSGATVICNADLASFLAVEDGLENIAPMHIGGKRQFDFGQVKLTQAFHGSQTVRDGRIINLGFPTGIVFTIEGKNIYFAGDTGLFSDMKLIGELNPLDVAFLPIGDNFTMGPEDAAIAARFLQAKLVIPMHYNTFPLIEQDPHQFVASLDEGISGKVLEIGEGIEI.

This sequence belongs to the UPF0173 family.

The polypeptide is UPF0173 metal-dependent hydrolase lin1612 (Listeria innocua serovar 6a (strain ATCC BAA-680 / CLIP 11262)).